Reading from the N-terminus, the 247-residue chain is Probable transcriptional regulatory protein Gura_1416 (247 aa).

It belongs to the TACO1 family.

The protein resides in the cytoplasm. The polypeptide is Probable transcriptional regulatory protein Gura_1416 (Geotalea uraniireducens (strain Rf4) (Geobacter uraniireducens)).